The primary structure comprises 235 residues: Small ribosomal subunit protein uS2 (235 aa).

It belongs to the universal ribosomal protein uS2 family.

The polypeptide is Small ribosomal subunit protein uS2 (Geobacillus sp. (strain WCH70)).